Here is a 106-residue protein sequence, read N- to C-terminus: uncharacterized protein (106 aa).

3 helical membrane-spanning segments follow: residues 5 to 27 (IFVI…GIII), 42 to 64 (AVAA…LAYM), and 76 to 98 (LPYI…TNFF).

It is found in the cell membrane. This is an uncharacterized protein from Archaeoglobus fulgidus (strain ATCC 49558 / DSM 4304 / JCM 9628 / NBRC 100126 / VC-16).